Here is a 247-residue protein sequence, read N- to C-terminus: uncharacterized protein (247 aa).

It is found in the mitochondrion. This is an uncharacterized protein from Schizosaccharomyces pombe (strain 972 / ATCC 24843) (Fission yeast).